Reading from the N-terminus, the 202-residue chain is Orotate phosphoribosyltransferase (202 aa).

113-121 (EDIITTGGS) is a 5-phospho-alpha-D-ribose 1-diphosphate binding site. Positions 117 and 145 each coordinate orotate.

This sequence belongs to the purine/pyrimidine phosphoribosyltransferase family. PyrE subfamily. As to quaternary structure, homodimer. It depends on Mg(2+) as a cofactor.

The enzyme catalyses orotidine 5'-phosphate + diphosphate = orotate + 5-phospho-alpha-D-ribose 1-diphosphate. Its pathway is pyrimidine metabolism; UMP biosynthesis via de novo pathway; UMP from orotate: step 1/2. Functionally, catalyzes the transfer of a ribosyl phosphate group from 5-phosphoribose 1-diphosphate to orotate, leading to the formation of orotidine monophosphate (OMP). In Sulfurimonas denitrificans (strain ATCC 33889 / DSM 1251) (Thiomicrospira denitrificans (strain ATCC 33889 / DSM 1251)), this protein is Orotate phosphoribosyltransferase.